The following is a 283-amino-acid chain: Phosphate import ATP-binding protein PstB 1 (283 aa).

The segment covering 1 to 16 (MSSDDTTDPTADDESF) has biased composition (acidic residues). The disordered stretch occupies residues 1–35 (MSSDDTTDPTADDESFTDSPVAGLEQSTTTRGSGR). One can recognise an ABC transporter domain in the interval 38–278 (ISARNINVWY…PSSERVENYI (241 aa)). 70-77 (GPSGCGKS) lines the ATP pocket.

Belongs to the ABC transporter superfamily. Phosphate importer (TC 3.A.1.7) family. In terms of assembly, the complex is composed of two ATP-binding proteins (PstB), two transmembrane proteins (PstC and PstA) and a solute-binding protein (PstS).

It is found in the cell membrane. The catalysed reaction is phosphate(out) + ATP + H2O = ADP + 2 phosphate(in) + H(+). Part of the ABC transporter complex PstSACB involved in phosphate import. Responsible for energy coupling to the transport system. This Natronomonas pharaonis (strain ATCC 35678 / DSM 2160 / CIP 103997 / JCM 8858 / NBRC 14720 / NCIMB 2260 / Gabara) (Halobacterium pharaonis) protein is Phosphate import ATP-binding protein PstB 1.